A 105-amino-acid chain; its full sequence is Large ribosomal subunit protein uL23 (105 aa).

This sequence belongs to the universal ribosomal protein uL23 family. In terms of assembly, part of the 50S ribosomal subunit. Contacts protein L29, and trigger factor when it is bound to the ribosome.

Its function is as follows. One of the early assembly proteins it binds 23S rRNA. One of the proteins that surrounds the polypeptide exit tunnel on the outside of the ribosome. Forms the main docking site for trigger factor binding to the ribosome. The protein is Large ribosomal subunit protein uL23 of Chloroherpeton thalassium (strain ATCC 35110 / GB-78).